The chain runs to 314 residues: Olfactory receptor 1E5 (314 aa).

Residues 1-25 (MMGQNQTSISDFLLLGLPIQPEQQN) are Extracellular-facing. Residue N5 is glycosylated (N-linked (GlcNAc...) asparagine). A helical transmembrane segment spans residues 26 to 49 (LCYALFLAMYLTTLLGNLLIIVLI). The Cytoplasmic segment spans residues 50-57 (RLDSHLHT). Residues 58–79 (PMYLFLSNLSFSDLCFSSVTIP) form a helical membrane-spanning segment. Topologically, residues 80-100 (KLLQNMQNQDPSIPYADCLTQ) are extracellular. A disulfide bridge connects residues C97 and C189. A helical membrane pass occupies residues 101–120 (MYFFLLFGDLESFLLVAMAY). Topologically, residues 121-139 (DRYVAICFPLHYTAIMSPM) are cytoplasmic. The chain crosses the membrane as a helical span at residues 140 to 158 (LCLSLVALSWVLTTFHAML). The Extracellular segment spans residues 159–196 (HTLLMARLCFCADNVIPHFFCDMSALLKLACSDTRVNE). Residues 197–219 (WVIFIMGGLIVVIPFLLILGSYA) traverse the membrane as a helical segment. Topologically, residues 220-236 (RIVSSILKVPSSKGICK) are cytoplasmic. A helical membrane pass occupies residues 237–260 (AFSTCGSHLSVVSLFYGTIIGLYL). Residues 261 to 272 (CPSANSSTLKET) are Extracellular-facing. Residue N265 is glycosylated (N-linked (GlcNAc...) asparagine). A helical transmembrane segment spans residues 273–292 (VMAMMYTVVTPMLNPFIYSL). Over 293 to 314 (RNRDMKGALERVIXKRKNPFLL) the chain is Cytoplasmic.

It belongs to the G-protein coupled receptor 1 family.

It localises to the cell membrane. Odorant receptor. The polypeptide is Olfactory receptor 1E5 (OR1E5) (Pan troglodytes (Chimpanzee)).